We begin with the raw amino-acid sequence, 248 residues long: ATP synthase subunit a, chloroplastic (248 aa).

Transmembrane regions (helical) follow at residues 38 to 58 (QVLI…AIAV), 96 to 116 (VPFI…GALL), 135 to 155 (INTT…AGLT), 200 to 220 (LVVV…VMFL), and 221 to 241 (GLFT…AYIG).

The protein belongs to the ATPase A chain family. In terms of assembly, F-type ATPases have 2 components, CF(1) - the catalytic core - and CF(0) - the membrane proton channel. CF(1) has five subunits: alpha(3), beta(3), gamma(1), delta(1), epsilon(1). CF(0) has four main subunits: a, b, b' and c.

It localises to the plastid. Its subcellular location is the chloroplast thylakoid membrane. Key component of the proton channel; it plays a direct role in the translocation of protons across the membrane. The sequence is that of ATP synthase subunit a, chloroplastic from Nymphaea alba (White water-lily).